The sequence spans 331 residues: FMRFamide-related neuropeptides (331 aa).

An N-terminal signal peptide occupies residues 1–25; that stretch reads MRCWSPCSLLVVIVIYCLSSHTSEA. A propeptide spanning residues 26-65 is cleaved from the precursor; it reads FDLAQACVESQRLSLLPICDTIFAVQQEGAQQSADDGMRS. Residues phenylalanine 71 and phenylalanine 83 each carry the phenylalanine amide modification. The propeptide occupies 86–94; the sequence is NVPDLPFED. Phenylalanine 100 is subject to Phenylalanine amide. Residues 103–168 constitute a propeptide that is removed on maturation; it reads AAPQLDDLLK…YIDDVEDSDV (66 aa). A disordered region spans residues 122–158; it reads QKADETSVRRKRSTDAAPQNNAENPEQKNDSAKITKR. Residues 146–158 are compositionally biased toward basic and acidic residues; sequence PEQKNDSAKITKR. A phenylalanine amide mark is found at phenylalanine 174 and phenylalanine 181. Positions 184-194 are excised as a propeptide; it reads NPSDAGNKLTE. Phenylalanine 200 carries the phenylalanine amide modification. The propeptide occupies 203–205; that stretch reads DPE. At phenylalanine 211 the chain carries Phenylalanine amide. Residues 214–216 constitute a propeptide that is removed on maturation; that stretch reads SDD. Phenylalanine 222 bears the Phenylalanine amide mark. Residues 225-236 constitute a propeptide that is removed on maturation; sequence NPSDVEDELEED. Phenylalanine 242 carries the post-translational modification Phenylalanine amide. The propeptide occupies 245 to 254; it reads GGEDDEEEAE. Phenylalanine 260 carries the post-translational modification Phenylalanine amide. The propeptide occupies 263 to 265; the sequence is DPE. Phenylalanine 271 bears the Phenylalanine amide mark. The propeptide occupies 274 to 277; that stretch reads SGED. Positions 282 to 296 are enriched in basic and acidic residues; the sequence is RFGRNPDEQEADKRF. Positions 282-310 are disordered; that stretch reads RFGRNPDEQEADKRFMRFGRGGEDDEVST. Position 283 is a phenylalanine amide (phenylalanine 283). The propeptide occupies 286 to 293; that stretch reads NPDEQEAD. Phenylalanine 299 is modified (phenylalanine amide). A propeptide spanning residues 302–312 is cleaved from the precursor; the sequence is GGEDDEVSTED. A Phenylalanine amide modification is found at phenylalanine 318. The propeptide occupies 321–331; that stretch reads SADKCKGCLEG.

Belongs to the FARP (FMRFamide related peptide) family.

The protein resides in the secreted. Excitatory neurotransmitters that directly modulate chromatophore function by activating chromatophore expansion at the chromatophore neuromuscular junction. The protein is FMRFamide-related neuropeptides of Doryteuthis pealeii (Longfin inshore squid).